The sequence spans 396 residues: S-adenosylmethionine synthase (396 aa).

His16 lines the ATP pocket. Asp18 is a Mg(2+) binding site. Position 44 (Glu44) interacts with K(+). L-methionine contacts are provided by Glu57 and Gln100. Residues 100 to 110 are flexible loop; that stretch reads QSPDIAQGVDR. Residues 167–169, 233–234, Asp242, 248–249, Ala265, and Lys269 contribute to the ATP site; these read DAK, RF, and RK. Asp242 contacts L-methionine. Lys273 contacts L-methionine.

The protein belongs to the AdoMet synthase family. In terms of assembly, homotetramer; dimer of dimers. Mg(2+) is required as a cofactor. The cofactor is K(+).

It localises to the cytoplasm. It catalyses the reaction L-methionine + ATP + H2O = S-adenosyl-L-methionine + phosphate + diphosphate. It functions in the pathway amino-acid biosynthesis; S-adenosyl-L-methionine biosynthesis; S-adenosyl-L-methionine from L-methionine: step 1/1. In terms of biological role, catalyzes the formation of S-adenosylmethionine (AdoMet) from methionine and ATP. The overall synthetic reaction is composed of two sequential steps, AdoMet formation and the subsequent tripolyphosphate hydrolysis which occurs prior to release of AdoMet from the enzyme. In Paraburkholderia xenovorans (strain LB400), this protein is S-adenosylmethionine synthase.